A 269-amino-acid polypeptide reads, in one-letter code: Formamidopyrimidine-DNA glycosylase (269 aa).

Catalysis depends on P2, which acts as the Schiff-base intermediate with DNA. E3 serves as the catalytic Proton donor. The active-site Proton donor; for beta-elimination activity is K57. Residues H90, R109, and K150 each coordinate DNA. The FPG-type zinc-finger motif lies at 235–269 (QVYGRKGEPCRVCGTPIVATKHAQRATFYCRQCQK). Catalysis depends on R259, which acts as the Proton donor; for delta-elimination activity.

It belongs to the FPG family. Monomer. Requires Zn(2+) as cofactor.

It carries out the reaction Hydrolysis of DNA containing ring-opened 7-methylguanine residues, releasing 2,6-diamino-4-hydroxy-5-(N-methyl)formamidopyrimidine.. It catalyses the reaction 2'-deoxyribonucleotide-(2'-deoxyribose 5'-phosphate)-2'-deoxyribonucleotide-DNA = a 3'-end 2'-deoxyribonucleotide-(2,3-dehydro-2,3-deoxyribose 5'-phosphate)-DNA + a 5'-end 5'-phospho-2'-deoxyribonucleoside-DNA + H(+). In terms of biological role, involved in base excision repair of DNA damaged by oxidation or by mutagenic agents. Acts as a DNA glycosylase that recognizes and removes damaged bases. Has a preference for oxidized purines, such as 7,8-dihydro-8-oxoguanine (8-oxoG). Has AP (apurinic/apyrimidinic) lyase activity and introduces nicks in the DNA strand. Cleaves the DNA backbone by beta-delta elimination to generate a single-strand break at the site of the removed base with both 3'- and 5'-phosphates. The polypeptide is Formamidopyrimidine-DNA glycosylase (Escherichia coli (strain 55989 / EAEC)).